We begin with the raw amino-acid sequence, 285 residues long: CBY1-interacting BAR domain-containing protein 1-B (285 aa).

A mitochondrion-targeting transit peptide spans Met-1–Lys-48. The interval Asp-11–Val-221 is BAR-like. The stretch at Arg-142–Leu-184 forms a coiled coil. Residues Asn-241–Arg-261 are compositionally biased toward polar residues. Positions Asn-241–Asn-285 are disordered. The span at Glu-267–Asn-285 shows a compositional bias: acidic residues.

This sequence belongs to the CIBAR family.

It localises to the cytoplasm. The protein localises to the cytoskeleton. Its subcellular location is the microtubule organizing center. It is found in the centrosome. The protein resides in the centriole. It localises to the cell projection. The protein localises to the cilium. Its subcellular location is the nucleus. It is found in the mitochondrion inner membrane. The protein resides in the flagellum. Its function is as follows. Plays a critical role in regulating mitochondrial ultrastructure and function by maintaining the integrity of mitochondrial morphology, particularly the organization of cristae. Plays a crucial role in ciliogenesis. Plays a key role in the correct positioning of the annulus, a septin-based ring structure in the sperm flagellum, serving both as a physical barrier and a membrane diffusion barrier that separates the midpiece (MP) from the principal piece (PP). The protein is CBY1-interacting BAR domain-containing protein 1-B of Xenopus laevis (African clawed frog).